Reading from the N-terminus, the 1385-residue chain is Defecation cycle abnormal dec-7 (1385 aa).

An N-terminal signal peptide occupies residues 1–19 (MWTARHAVALLVVLTYAYS). N-linked (GlcNAc...) asparagine glycosylation occurs at asparagine 156. Positions 234-262 (SQTNYGAPNYQQAGAQSAANQQFSNPSQY) are disordered. Over residues 242 to 261 (NYQQAGAQSAANQQFSNPSQ) the composition is skewed to low complexity. Positions 285–450 (QIYGKRKKRQ…GRWIHRVDEV (166 aa)) constitute an NIDO domain. Asparagine 313, asparagine 386, asparagine 413, asparagine 458, asparagine 480, asparagine 562, and asparagine 583 each carry an N-linked (GlcNAc...) asparagine glycan. In terms of domain architecture, AMOP spans 681–840 (GRNWPIDMCI…DHCEFYYWRR (160 aa)). The region spanning 852–1088 (AAGYIYGEPH…FWKIDGTNDK (237 aa)) is the VWFD domain. Asparagine 909, asparagine 921, asparagine 975, asparagine 1009, and asparagine 1124 each carry an N-linked (GlcNAc...) asparagine glycan. The region spanning 1179–1238 (ISCGPLLKKEGVVKTPPAANYLDGDKVVFSCKPKYYIHGDIERVCRNGTWSPGWWAWCRD) is the Sushi domain. 2 cysteine pairs are disulfide-bonded: cysteine 1181/cysteine 1223 and cysteine 1209/cysteine 1236. N-linked (GlcNAc...) asparagine glycosylation is present at asparagine 1225. Residues 1251–1271 (LLSIFGISLIFVIFFCILWNI) traverse the membrane as a helical segment. A disordered region spans residues 1321-1385 (MNQPSRPIPS…GNMRFETSAI (65 aa)).

Highly expressed in the intestinal epithelia.

It localises to the membrane. The protein localises to the cell junction. Its function is as follows. May negatively regulate activity of innexin gap junction protein inx-16, thereby mediating the rhythmic frequency of the defecation motor program. Required for the clustering of inx-16 to the cell-cell junction of the intestinal epithelia. Probably dispensable for intestinal integrity. May be a cytokine receptor. This Caenorhabditis elegans protein is Defecation cycle abnormal dec-7.